We begin with the raw amino-acid sequence, 118 residues long: Elicitin (118 aa).

The signal sequence occupies residues 1-20 (MNFRALFAATVAALVGSTSA). Disulfide bonds link cysteine 23-cysteine 91, cysteine 47-cysteine 76, and cysteine 71-cysteine 115.

It belongs to the elicitin family.

It is found in the secreted. Its function is as follows. Induces local and distal defense responses (incompatible hypersensitive reaction) in plants from the solanaceae and cruciferae families. Elicits leaf necrosis and causes the accumulation of pathogenesis-related proteins. Might interact with the lipidic molecules of the plasma membrane. In Phytophthora nicotianae (Potato buckeye rot agent), this protein is Elicitin (PARA1).